Consider the following 462-residue polypeptide: Argininosuccinate lyase (462 aa).

This sequence belongs to the lyase 1 family. Argininosuccinate lyase subfamily.

It is found in the cytoplasm. The catalysed reaction is 2-(N(omega)-L-arginino)succinate = fumarate + L-arginine. It participates in amino-acid biosynthesis; L-arginine biosynthesis; L-arginine from L-ornithine and carbamoyl phosphate: step 3/3. The polypeptide is Argininosuccinate lyase (Chloroflexus aggregans (strain MD-66 / DSM 9485)).